The sequence spans 405 residues: S-adenosylmethionine synthase (405 aa).

141 to 146 (GQGSVD) serves as a coordination point for ATP.

It belongs to the AdoMet synthase 2 family. Mg(2+) serves as cofactor.

The enzyme catalyses L-methionine + ATP + H2O = S-adenosyl-L-methionine + phosphate + diphosphate. The protein operates within amino-acid biosynthesis; S-adenosyl-L-methionine biosynthesis; S-adenosyl-L-methionine from L-methionine: step 1/1. In terms of biological role, catalyzes the formation of S-adenosylmethionine from methionine and ATP. The polypeptide is S-adenosylmethionine synthase (Methanococcus maripaludis (strain C6 / ATCC BAA-1332)).